Reading from the N-terminus, the 330-residue chain is NADH-quinone oxidoreductase subunit H (330 aa).

The next 9 membrane-spanning stretches (helical) occupy residues 5 to 25, 44 to 64, 78 to 98, 122 to 142, 156 to 176, 192 to 212, 240 to 260, 271 to 293, and 310 to 330; these read LFFI…IACL, IGPD…MIKL, FIFL…LAPI, VLYV…AGLA, VMGL…VIMI, IFGW…MASF, MRWA…SIVI, FWFV…FFLW, and CWKI…IALI.

The protein belongs to the complex I subunit 1 family. NDH-1 is composed of 14 different subunits. Subunits NuoA, H, J, K, L, M, N constitute the membrane sector of the complex.

The protein resides in the cell inner membrane. It catalyses the reaction a quinone + NADH + 5 H(+)(in) = a quinol + NAD(+) + 4 H(+)(out). Functionally, NDH-1 shuttles electrons from NADH, via FMN and iron-sulfur (Fe-S) centers, to quinones in the respiratory chain. The immediate electron acceptor for the enzyme in this species is believed to be ubiquinone. Couples the redox reaction to proton translocation (for every two electrons transferred, four hydrogen ions are translocated across the cytoplasmic membrane), and thus conserves the redox energy in a proton gradient. This subunit may bind ubiquinone. The polypeptide is NADH-quinone oxidoreductase subunit H (Campylobacter curvus (strain 525.92)).